The primary structure comprises 336 residues: Large ribosomal subunit protein uL3 (336 aa).

The tract at residues 1 to 34 (MVRHHQPRKGSVAFSPRKRAAKETPRIKSWPQND) is disordered.

The protein belongs to the universal ribosomal protein uL3 family. As to quaternary structure, part of the 50S ribosomal subunit. Forms a cluster with proteins L14 and L24e.

In terms of biological role, one of the primary rRNA binding proteins, it binds directly near the 3'-end of the 23S rRNA, where it nucleates assembly of the 50S subunit. The chain is Large ribosomal subunit protein uL3 from Methanobrevibacter smithii (strain ATCC 35061 / DSM 861 / OCM 144 / PS).